The primary structure comprises 1007 residues: Protein vav-1 (1007 aa).

Residues 37-151 form the Calponin-homology (CH) domain; that stretch reads CDLWIGCARW…TLSFLSHTKE (115 aa). The interval 151 to 239 is AC; it reads ESLSRGVDPF…ENDLQNTPTL (89 aa). The disordered stretch occupies residues 153–176; sequence LSRGVDPFPDTDNNQEGTSNGSEF. Over residues 163–174 the composition is skewed to polar residues; it reads TDNNQEGTSNGS. Tyrosine 183, tyrosine 200, and tyrosine 217 each carry phosphotyrosine. Positions 240–437 constitute a DH domain; the sequence is KRNRCIRELY…EDVCNYINEE (198 aa). The PH domain maps to 470–598; it reads RVNLDGEVKM…WMTALLLSKS (129 aa). Residues 610–664 form a Phorbol-ester/DAG-type zinc finger; that stretch reads NHKVAFHSFRVDVKNPATCDVCDKLMKGLQYQGYKCESCNMSMHKECLGLKKCEA. Residues 688 to 750 enclose the SH3 1 domain; it reads HEGDIVVANS…HLDHVSQSRT (63 aa). The segment at 778-817 is disordered; that stretch reads LPNKLLSDGSSRSLSGPHGSRSSRNSSSSTINGSMDSVPR. Positions 782 to 814 are enriched in low complexity; it reads LLSDGSSRSLSGPHGSRSSRNSSSSTINGSMDS. One can recognise an SH2 domain in the interval 831 to 925; that stretch reads WYMGEMERAK…ALDTCLKNPY (95 aa). The region spanning 926 to 991 is the SH3 2 domain; the sequence is SQCKVFKAVH…PLSYVKPYDP (66 aa).

In terms of processing, GEF activity is regulated by phosphorylation on tyrosine residues. Strong expression in the pharynx, proximal gonad, spermatheca, intestine and rectal epithelia.

Functionally, acts as a guanine nucleotide exchange factor (GEF) for Rho GTPase. Has a critical roles in the generation of rhythmic behaviors: feeding, defecation and ovulation by dynamically regulating the concentration of intracellular calcium. Plays a role in male tail tip morphogenesis. The polypeptide is Protein vav-1 (Caenorhabditis elegans).